Consider the following 454-residue polypeptide: MILSKDIKLLPGSKVEVVIRVSKNVIQEKYNSLLQDYSSRLKIQGFRIGKVPINVIENKYSEGLKATVLEEVINNSFKEFFKEESKIPLSYATPTVKEKNLKLNLDKDFEFTFTYETYPEFKIPSFDEIDIKVEIPEVFIDDSDIDDEIKNLQIENSIIIEDEEGVVKEDSIVKVDFVELDDLSNEIVSTKRQGFVFTVGKSETYYDFDKDVIGMRINEERVIEKSYIADYKFEELAGSSRKLKIKIKSIKKRDLPLIDDEFAQDISDKYNTLDDLKNFIRSSLLNIVEEKKETLKLNKFFSTISEKLEIDIPHSMIEAEIEIAFKDAKRQNKNNMSLEEFKSIFYSSGYIGGDNLKDEILGNLKSKLIMQKMVDLDPIKVTESDVEDEMARQSKNLGVSYEEIKKFYEDQNLISYLKDDIKRERAKKKILENLKEVKGKKLNFRDFVNYKICE.

The PPIase FKBP-type domain maps to 170-256 (DSIVKVDFVE…IKSIKKRDLP (87 aa)).

It belongs to the FKBP-type PPIase family. Tig subfamily.

Its subcellular location is the cytoplasm. The enzyme catalyses [protein]-peptidylproline (omega=180) = [protein]-peptidylproline (omega=0). Functionally, involved in protein export. Acts as a chaperone by maintaining the newly synthesized protein in an open conformation. Functions as a peptidyl-prolyl cis-trans isomerase. This chain is Trigger factor (tig), found in Borreliella burgdorferi (strain ATCC 35210 / DSM 4680 / CIP 102532 / B31) (Borrelia burgdorferi).